We begin with the raw amino-acid sequence, 372 residues long: DNA replication and repair protein RecF (372 aa).

Position 30-37 (30-37 (GENGQGKT)) interacts with ATP.

It belongs to the RecF family.

The protein resides in the cytoplasm. Its function is as follows. The RecF protein is involved in DNA metabolism; it is required for DNA replication and normal SOS inducibility. RecF binds preferentially to single-stranded, linear DNA. It also seems to bind ATP. The polypeptide is DNA replication and repair protein RecF (Anaeromyxobacter dehalogenans (strain 2CP-1 / ATCC BAA-258)).